A 110-amino-acid chain; its full sequence is MAKAILKFIRVSPIKARLIAREVQGMNAEYAIASLQFTPNKAAGIISKVIASAVANAGLDPVDAVITSARVDKGPVLKRFTPRARGSASPKHKPTAHIMIEVAAATKGDK.

Belongs to the universal ribosomal protein uL22 family. Part of the 50S ribosomal subunit.

Functionally, this protein binds specifically to 23S rRNA; its binding is stimulated by other ribosomal proteins, e.g. L4, L17, and L20. It is important during the early stages of 50S assembly. It makes multiple contacts with different domains of the 23S rRNA in the assembled 50S subunit and ribosome. The globular domain of the protein is located near the polypeptide exit tunnel on the outside of the subunit, while an extended beta-hairpin is found that lines the wall of the exit tunnel in the center of the 70S ribosome. The polypeptide is Large ribosomal subunit protein uL22 (Aliarcobacter butzleri (strain RM4018) (Arcobacter butzleri)).